A 766-amino-acid chain; its full sequence is BMP/retinoic acid-inducible neural-specific protein 3 (766 aa).

Residues M1–A33 form the signal peptide. The MACPF domain maps to R74–A264. 6 N-linked (GlcNAc...) asparagine glycosylation sites follow: N168, N337, N456, N562, N609, and N641.

The protein belongs to the BRINP family. As to expression, expressed in olfactory bulb, cerebellum and neuronal layers in hippocampus.

Its subcellular location is the secreted. It localises to the mitochondrion. In terms of biological role, inhibits neuronal cell proliferation by negative regulation of the cell cycle transition. Promotes pituitary gonadotrope cell proliferation, migration and invasion, when overexpressed. May play a role in cell pituitary tumor development. The sequence is that of BMP/retinoic acid-inducible neural-specific protein 3 (Brinp3) from Rattus norvegicus (Rat).